Here is a 270-residue protein sequence, read N- to C-terminus: Putative pyruvate, phosphate dikinase regulatory protein (270 aa).

151 to 158 (GVSRTSKT) provides a ligand contact to ADP.

The protein belongs to the pyruvate, phosphate/water dikinase regulatory protein family. PDRP subfamily.

It catalyses the reaction N(tele)-phospho-L-histidyl/L-threonyl-[pyruvate, phosphate dikinase] + ADP = N(tele)-phospho-L-histidyl/O-phospho-L-threonyl-[pyruvate, phosphate dikinase] + AMP + H(+). It carries out the reaction N(tele)-phospho-L-histidyl/O-phospho-L-threonyl-[pyruvate, phosphate dikinase] + phosphate + H(+) = N(tele)-phospho-L-histidyl/L-threonyl-[pyruvate, phosphate dikinase] + diphosphate. In terms of biological role, bifunctional serine/threonine kinase and phosphorylase involved in the regulation of the pyruvate, phosphate dikinase (PPDK) by catalyzing its phosphorylation/dephosphorylation. The chain is Putative pyruvate, phosphate dikinase regulatory protein from Lysinibacillus sphaericus (strain C3-41).